The sequence spans 109 residues: Putative double-stranded DNA mimic protein YciU (109 aa).

It belongs to the putative dsDNA mimic protein family.

Its function is as follows. May act as a double-stranded DNA (dsDNA) mimic. Probably regulates the activity of a dsDNA-binding protein. The chain is Putative double-stranded DNA mimic protein YciU from Shigella flexneri.